The sequence spans 432 residues: Phosphomethylpyrimidine synthase (432 aa).

Residues Asn66, Met95, Tyr124, His163, 185-187 (SRG), 226-229 (DGLR), and Glu265 contribute to the substrate site. A Zn(2+)-binding site is contributed by His269. Tyr292 contributes to the substrate binding site. His333 provides a ligand contact to Zn(2+). Residues Cys409, Cys412, and Cys416 each contribute to the [4Fe-4S] cluster site.

This sequence belongs to the ThiC family. [4Fe-4S] cluster serves as cofactor.

It carries out the reaction 5-amino-1-(5-phospho-beta-D-ribosyl)imidazole + S-adenosyl-L-methionine = 4-amino-2-methyl-5-(phosphooxymethyl)pyrimidine + CO + 5'-deoxyadenosine + formate + L-methionine + 3 H(+). The protein operates within cofactor biosynthesis; thiamine diphosphate biosynthesis. Catalyzes the synthesis of the hydroxymethylpyrimidine phosphate (HMP-P) moiety of thiamine from aminoimidazole ribotide (AIR) in a radical S-adenosyl-L-methionine (SAM)-dependent reaction. In Thermoanaerobacter pseudethanolicus (strain ATCC 33223 / 39E) (Clostridium thermohydrosulfuricum), this protein is Phosphomethylpyrimidine synthase.